A 130-amino-acid chain; its full sequence is Small ribosomal subunit protein uS9 (130 aa).

The disordered stretch occupies residues 105-130; it reads TRDPRMKERKKYGLKGARRAPQFSKR. The segment covering 111–130 has biased composition (basic residues); that stretch reads KERKKYGLKGARRAPQFSKR.

This sequence belongs to the universal ribosomal protein uS9 family.

The sequence is that of Small ribosomal subunit protein uS9 from Bacillus pumilus (strain SAFR-032).